Consider the following 309-residue polypeptide: Carboxylesterase Culp6 homolog (309 aa).

A helical membrane pass occupies residues 5 to 25; the sequence is ITVIAVLIVLALIGVGIVQYV. A disulfide bridge links Cys-55 with Cys-146. Residues Ser-157, Asp-253, and His-279 contribute to the active site. Residues Cys-249 and Cys-256 are joined by a disulfide bond.

The protein belongs to the cutinase family.

The protein localises to the cell membrane. The catalysed reaction is a butanoate ester + H2O = an aliphatic alcohol + butanoate + H(+). Inhibited by tetrahydrolipstatin (THL), a specific lipase inhibitor. Esterase that may be involved in cell wall biosynthesis and/or maintenance. Hydrolyzes pNP-butyrate (C4). This Corynebacterium glutamicum (strain ATCC 13032 / DSM 20300 / JCM 1318 / BCRC 11384 / CCUG 27702 / LMG 3730 / NBRC 12168 / NCIMB 10025 / NRRL B-2784 / 534) protein is Carboxylesterase Culp6 homolog.